A 104-amino-acid chain; its full sequence is Small ribosomal subunit protein bS18 (104 aa).

Basic and acidic residues predominate over residues 1–14; sequence MMNNEHDNFQKEVE. The interval 1–25 is disordered; that stretch reads MMNNEHDNFQKEVETTTETTFNREE.

This sequence belongs to the bacterial ribosomal protein bS18 family. In terms of assembly, part of the 30S ribosomal subunit. Forms a tight heterodimer with protein bS6.

Its function is as follows. Binds as a heterodimer with protein bS6 to the central domain of the 16S rRNA, where it helps stabilize the platform of the 30S subunit. This Mycoplasma pneumoniae (strain ATCC 29342 / M129 / Subtype 1) (Mycoplasmoides pneumoniae) protein is Small ribosomal subunit protein bS18.